Here is a 298-residue protein sequence, read N- to C-terminus: Porphobilinogen deaminase (298 aa).

S-(dipyrrolylmethanemethyl)cysteine is present on C239.

This sequence belongs to the HMBS family. In terms of assembly, monomer. Dipyrromethane is required as a cofactor.

The catalysed reaction is 4 porphobilinogen + H2O = hydroxymethylbilane + 4 NH4(+). It participates in porphyrin-containing compound metabolism; protoporphyrin-IX biosynthesis; coproporphyrinogen-III from 5-aminolevulinate: step 2/4. Functionally, tetrapolymerization of the monopyrrole PBG into the hydroxymethylbilane pre-uroporphyrinogen in several discrete steps. This Ehrlichia chaffeensis (strain ATCC CRL-10679 / Arkansas) protein is Porphobilinogen deaminase.